The chain runs to 239 residues: Prolactin-8A4 (239 aa).

The first 31 residues, 1–31 (MMKLALSQPPFSGTLLMLVVSILLLWEKAAS), serve as a signal peptide directing secretion. Disulfide bonds link cysteine 35–cysteine 42 and cysteine 102–cysteine 215. 2 N-linked (GlcNAc...) asparagine glycosylation sites follow: asparagine 211 and asparagine 218. A disulfide bond links cysteine 232 and cysteine 239.

Belongs to the somatotropin/prolactin family. As to expression, placental basal zone cells.

It localises to the secreted. The sequence is that of Prolactin-8A4 (Prl8a4) from Rattus norvegicus (Rat).